We begin with the raw amino-acid sequence, 173 residues long: Translation initiation factor IF-3 (173 aa).

Belongs to the IF-3 family. As to quaternary structure, monomer.

Its subcellular location is the cytoplasm. Functionally, IF-3 binds to the 30S ribosomal subunit and shifts the equilibrium between 70S ribosomes and their 50S and 30S subunits in favor of the free subunits, thus enhancing the availability of 30S subunits on which protein synthesis initiation begins. This Methylorubrum extorquens (strain CM4 / NCIMB 13688) (Methylobacterium extorquens) protein is Translation initiation factor IF-3.